The sequence spans 187 residues: Casparian strip membrane protein 1 (187 aa).

The span at 1–10 (MKGSSEHGET) shows a compositional bias: basic and acidic residues. The disordered stretch occupies residues 1–20 (MKGSSEHGETSKQAPLGSSR). At 1 to 27 (MKGSSEHGETSKQAPLGSSRGVSKGVS) the chain is on the cytoplasmic side. A helical membrane pass occupies residues 28-48 (VLDLILRFIAIIGTLASAIAM). At 49–75 (GTTNETLPFFTQFIRFKAQYSDLPTLT) the chain is on the extracellular side. N-linked (GlcNAc...) asparagine glycosylation is present at Asn-52. A helical membrane pass occupies residues 76 to 96 (FFVVANSIVCAYLTLSLPLSI). Residues 97 to 115 (VHIIRSRAKYSRLLLVVLD) lie on the Cytoplasmic side of the membrane. The helical transmembrane segment at 116–136 (AAMLALVTPGASAAAAIVYLA) threads the bilayer. At 137–162 (HKGNVRANWLAICQQFDSFCERISGC) the chain is on the extracellular side. Residues 163–183 (LIGSFGAMVMLVLLLLLSAIA) traverse the membrane as a helical segment. The Cytoplasmic segment spans residues 184–187 (LARR).

Belongs to the Casparian strip membrane proteins (CASP) family. As to quaternary structure, homodimer and heterodimers.

It localises to the cell membrane. Regulates membrane-cell wall junctions and localized cell wall deposition. Required for establishment of the Casparian strip membrane domain (CSD) and the subsequent formation of Casparian strips, a cell wall modification of the root endodermis that determines an apoplastic barrier between the intraorganismal apoplasm and the extraorganismal apoplasm and prevents lateral diffusion. In Zea mays (Maize), this protein is Casparian strip membrane protein 1.